The following is a 393-amino-acid chain: NAD(P)H-quinone oxidoreductase subunit H, chloroplastic (393 aa).

It belongs to the complex I 49 kDa subunit family. As to quaternary structure, NDH is composed of at least 16 different subunits, 5 of which are encoded in the nucleus.

It is found in the plastid. Its subcellular location is the chloroplast thylakoid membrane. The catalysed reaction is a plastoquinone + NADH + (n+1) H(+)(in) = a plastoquinol + NAD(+) + n H(+)(out). It catalyses the reaction a plastoquinone + NADPH + (n+1) H(+)(in) = a plastoquinol + NADP(+) + n H(+)(out). Its function is as follows. NDH shuttles electrons from NAD(P)H:plastoquinone, via FMN and iron-sulfur (Fe-S) centers, to quinones in the photosynthetic chain and possibly in a chloroplast respiratory chain. The immediate electron acceptor for the enzyme in this species is believed to be plastoquinone. Couples the redox reaction to proton translocation, and thus conserves the redox energy in a proton gradient. The protein is NAD(P)H-quinone oxidoreductase subunit H, chloroplastic of Arabis hirsuta (Hairy rock-cress).